Consider the following 443-residue polypeptide: Methyl-coenzyme M reductase subunit beta (443 aa).

Tyr367 contacts coenzyme M. Gly369 is a coenzyme B binding site.

Belongs to the methyl-coenzyme M reductase beta subunit family. As to quaternary structure, MCR is a hexamer of two alpha, two beta, and two gamma chains, forming a dimer of heterotrimers. Coenzyme F430 serves as cofactor.

It localises to the cytoplasm. It carries out the reaction coenzyme B + methyl-coenzyme M = methane + coenzyme M-coenzyme B heterodisulfide. The protein operates within one-carbon metabolism; methyl-coenzyme M reduction; methane from methyl-coenzyme M: step 1/1. In terms of biological role, component of the methyl-coenzyme M reductase (MCR) I that catalyzes the reductive cleavage of methyl-coenzyme M (CoM-S-CH3 or 2-(methylthio)ethanesulfonate) using coenzyme B (CoB or 7-mercaptoheptanoylthreonine phosphate) as reductant which results in the production of methane and the mixed heterodisulfide of CoB and CoM (CoM-S-S-CoB). This is the final step in methanogenesis. The protein is Methyl-coenzyme M reductase subunit beta (mcrB) of Methanococcus vannielii.